Consider the following 250-residue polypeptide: MADS-box protein J2 (250 aa).

Residues 1–61 (MGRGRVELKR…GKLYEFSSAS (61 aa)) enclose the MADS-box domain. Residues 87-177 (TQMNYNEYVR…KNKLEESAAR (91 aa)) enclose the K-box domain.

The protein resides in the nucleus. MADS-box transcription factor that acts redundantly with EJ2 to control meristem maturation and inflorescence architecture. The protein is MADS-box protein J2 of Solanum lycopersicum (Tomato).